The sequence spans 715 residues: Lanosterol synthase erg7B (715 aa).

A PFTB 1 repeat occupies 111–153 (AIEIKNYLMARANPVDGGWGLHSEGDSSVFGTSLNYTVLRLLG). Asp-445 functions as the Proton donor in the catalytic mechanism. PFTB repeat units follow at residues 550 to 590 (IQRG…RSAG) and 599 to 640 (VRRG…VVQT).

It belongs to the terpene cyclase/mutase family.

It is found in the lipid droplet. It localises to the endoplasmic reticulum membrane. The catalysed reaction is (S)-2,3-epoxysqualene = lanosterol. It functions in the pathway steroid metabolism; ergosterol biosynthesis. In terms of biological role, lanosterol synthase; part of the third module of ergosterol biosynthesis pathway that includes the late steps of the pathway. ERG7A and ERG7B catalyze the cyclization of (S)-2,3 oxidosqualene to lanosterol, a reaction that forms the sterol core. The third module or late pathway involves the ergosterol synthesis itself through consecutive reactions that mainly occur in the endoplasmic reticulum (ER) membrane. Firstly, the squalene synthase erg9 catalyzes the condensation of 2 farnesyl pyrophosphate moieties to form squalene, which is the precursor of all steroids. Squalene synthase is crucial for balancing the incorporation of farnesyl diphosphate (FPP) into sterol and nonsterol isoprene synthesis. Secondly, squalene is converted into lanosterol by the consecutive action of the squalene epoxidase erg1 and the lanosterol synthase erg7. Then, the delta(24)-sterol C-methyltransferase erg6 methylates lanosterol at C-24 to produce eburicol. Eburicol is the substrate of the sterol 14-alpha demethylase encoded by cyp51A and cyp51B, to yield 4,4,24-trimethyl ergosta-8,14,24(28)-trienol. The C-14 reductase erg24 then reduces the C14=C15 double bond which leads to 4,4-dimethylfecosterol. A sequence of further demethylations at C-4, involving the C-4 demethylation complex containing the C-4 methylsterol oxidases erg25A or erg25B, the sterol-4-alpha-carboxylate 3-dehydrogenase erg26 and the 3-keto-steroid reductase erg27, leads to the production of fecosterol via 4-methylfecosterol. The C-8 sterol isomerase erg2 then catalyzes the reaction which results in unsaturation at C-7 in the B ring of sterols and thus converts fecosterol to episterol. The sterol-C5-desaturase erg3B then catalyzes the introduction of a C-5 double bond in the B ring to produce 5-dehydroepisterol. The 2 other sterol-C5-desaturases, erg3A and erg3C, seem to be less important in ergosterol biosynthesis. The C-22 sterol desaturase erg5 further converts 5-dehydroepisterol into ergosta-5,7,22,24(28)-tetraen-3beta-ol by forming the C-22(23) double bond in the sterol side chain. Finally, ergosta-5,7,22,24(28)-tetraen-3beta-ol is substrate of the C-24(28) sterol reductases erg4A and erg4B to produce ergosterol. Possible alternative sterol biosynthetic pathways might exist from fecosterol to ergosterol, depending on the activities of the erg3 isoforms. The chain is Lanosterol synthase erg7B from Aspergillus fumigatus (strain ATCC MYA-4609 / CBS 101355 / FGSC A1100 / Af293) (Neosartorya fumigata).